Here is a 497-residue protein sequence, read N- to C-terminus: Aspartyl/glutamyl-tRNA(Asn/Gln) amidotransferase subunit B (497 aa).

Belongs to the GatB/GatE family. GatB subfamily. Heterotrimer of A, B and C subunits.

The catalysed reaction is L-glutamyl-tRNA(Gln) + L-glutamine + ATP + H2O = L-glutaminyl-tRNA(Gln) + L-glutamate + ADP + phosphate + H(+). It carries out the reaction L-aspartyl-tRNA(Asn) + L-glutamine + ATP + H2O = L-asparaginyl-tRNA(Asn) + L-glutamate + ADP + phosphate + 2 H(+). In terms of biological role, allows the formation of correctly charged Asn-tRNA(Asn) or Gln-tRNA(Gln) through the transamidation of misacylated Asp-tRNA(Asn) or Glu-tRNA(Gln) in organisms which lack either or both of asparaginyl-tRNA or glutaminyl-tRNA synthetases. The reaction takes place in the presence of glutamine and ATP through an activated phospho-Asp-tRNA(Asn) or phospho-Glu-tRNA(Gln). The sequence is that of Aspartyl/glutamyl-tRNA(Asn/Gln) amidotransferase subunit B from Novosphingobium aromaticivorans (strain ATCC 700278 / DSM 12444 / CCUG 56034 / CIP 105152 / NBRC 16084 / F199).